A 202-amino-acid polypeptide reads, in one-letter code: N-(5'-phosphoribosyl)anthranilate isomerase (202 aa).

Belongs to the TrpF family.

It carries out the reaction N-(5-phospho-beta-D-ribosyl)anthranilate = 1-(2-carboxyphenylamino)-1-deoxy-D-ribulose 5-phosphate. It participates in amino-acid biosynthesis; L-tryptophan biosynthesis; L-tryptophan from chorismate: step 3/5. The sequence is that of N-(5'-phosphoribosyl)anthranilate isomerase from Bacillus cereus (strain ATCC 14579 / DSM 31 / CCUG 7414 / JCM 2152 / NBRC 15305 / NCIMB 9373 / NCTC 2599 / NRRL B-3711).